The sequence spans 845 residues: Translation initiation factor IF-2 (845 aa).

The disordered stretch occupies residues 1 to 260 (MSDEQDKPTL…HMTSSGPREK (260 aa)). Pro residues predominate over residues 68-81 (APAPAPAAPRPAAP). Positions 101 to 140 (REAEEARMAALEENRRREEAERARAAEEERARAEKREEQA) are enriched in basic and acidic residues. 2 stretches are compositionally biased toward low complexity: residues 141–166 (ATKA…APPA) and 173–191 (TAAR…RFTP). Over residues 194 to 215 (ALKRPEPKRPEPKASRGGENRR) the composition is skewed to basic and acidic residues. Residues 344–514 (PRAPVVTIMG…ALQAEIMELK (171 aa)) enclose the tr-type G domain. Residues 353–360 (GHVDHGKT) form a G1 region. 353-360 (GHVDHGKT) contacts GTP. The segment at 378-382 (GITQH) is G2. The interval 400–403 (DTPG) is G3. GTP is bound by residues 400-404 (DTPGH) and 454-457 (NKVD). The G4 stretch occupies residues 454-457 (NKVD). The segment at 490 to 492 (SAL) is G5.

The protein belongs to the TRAFAC class translation factor GTPase superfamily. Classic translation factor GTPase family. IF-2 subfamily.

The protein localises to the cytoplasm. Its function is as follows. One of the essential components for the initiation of protein synthesis. Protects formylmethionyl-tRNA from spontaneous hydrolysis and promotes its binding to the 30S ribosomal subunits. Also involved in the hydrolysis of GTP during the formation of the 70S ribosomal complex. The polypeptide is Translation initiation factor IF-2 (Sphingopyxis alaskensis (strain DSM 13593 / LMG 18877 / RB2256) (Sphingomonas alaskensis)).